Here is a 299-residue protein sequence, read N- to C-terminus: ATP phosphoribosyltransferase (299 aa).

It belongs to the ATP phosphoribosyltransferase family. Long subfamily. In terms of assembly, equilibrium between an active dimeric form, an inactive hexameric form and higher aggregates. Interconversion between the various forms is largely reversible and is influenced by the natural substrates and inhibitors of the enzyme. Requires Mg(2+) as cofactor.

The protein resides in the cytoplasm. It catalyses the reaction 1-(5-phospho-beta-D-ribosyl)-ATP + diphosphate = 5-phospho-alpha-D-ribose 1-diphosphate + ATP. It participates in amino-acid biosynthesis; L-histidine biosynthesis; L-histidine from 5-phospho-alpha-D-ribose 1-diphosphate: step 1/9. With respect to regulation, feedback inhibited by histidine. Catalyzes the condensation of ATP and 5-phosphoribose 1-diphosphate to form N'-(5'-phosphoribosyl)-ATP (PR-ATP). Has a crucial role in the pathway because the rate of histidine biosynthesis seems to be controlled primarily by regulation of HisG enzymatic activity. This chain is ATP phosphoribosyltransferase, found in Escherichia coli O8 (strain IAI1).